The primary structure comprises 138 residues: Vesicle transport protein GOT1B (138 aa).

M1 bears the N-acetylmethionine mark. Residues 1–9 lie on the Cytoplasmic side of the membrane; it reads MISLTDTQK. Residues 10–30 form a helical membrane-spanning segment; sequence IGMGLTGFGVFFLFFGMILFF. Topologically, residues 31–32 are lumenal; that stretch reads DK. A helical transmembrane segment spans residues 33–53; sequence ALLAIGNVLFVAGLAFVIGLE. Residues 54–68 are Cytoplasmic-facing; sequence RTFRFFFQRHKVKAT. A topological domain (lumenal) is located at residue E90. Residues 91–109 form a helical membrane-spanning segment; that stretch reads IYGFFLLFRGFFPVVVGFI. At 110–138 the chain is on the cytoplasmic side; it reads RRVPVLGSLLNLPGIRSFVDKVGESNNMV.

It belongs to the GOT1 family.

The protein resides in the golgi apparatus membrane. May be involved in fusion of ER-derived transport vesicles with the Golgi complex. This is Vesicle transport protein GOT1B (Golt1b) from Mus musculus (Mouse).